Consider the following 538-residue polypeptide: BTB/POZ domain-containing protein 6 (538 aa).

Positions 1-17 (MLLPLACLHGRVAQCLT) are cleaved as a signal peptide. 2 disordered regions span residues 29–53 (PRRG…PPAK) and 76–115 (AAVG…SPGW). Residues 35–53 (ARGAASTGAEAAPAAPPAK) are compositionally biased toward low complexity. Residues 85-103 (RSPPSAPAPAPPPPAPAPP) are compositionally biased toward pro residues. The region spanning 136–206 (ADVHFVVGPP…MYSDEIDLEA (71 aa)) is the BTB domain.

Expressed in lens.

Its subcellular location is the cytoplasm. Adapter protein for the cul3 E3 ubiquitin-protein ligase complex. Involved in late neuronal development and muscle formation. In Homo sapiens (Human), this protein is BTB/POZ domain-containing protein 6.